Here is a 459-residue protein sequence, read N- to C-terminus: Bifunctional protein GlmU (459 aa).

The segment at 1–230 (MTTRNTIILA…FDESMGVNDR (230 aa)) is pyrophosphorylase. UDP-N-acetyl-alpha-D-glucosamine is bound by residues 9–12 (LAAG), Lys-23, Gln-73, 78–79 (GT), 101–103 (SGD), Gly-140, Glu-155, Asn-170, and Asn-228. Asp-103 serves as a coordination point for Mg(2+). Asn-228 contributes to the Mg(2+) binding site. Residues 231–251 (VALSAATKIMRDRINEAHMRD) form a linker region. Positions 252-459 (GVTLIDPATT…YQKLPYRGED (208 aa)) are N-acetyltransferase. UDP-N-acetyl-alpha-D-glucosamine is bound by residues Arg-333 and Lys-351. His-363 serves as the catalytic Proton acceptor. 2 residues coordinate UDP-N-acetyl-alpha-D-glucosamine: Tyr-366 and Asn-377. Acetyl-CoA contacts are provided by residues 386 to 387 (NY), Ser-405, Ala-423, and Arg-440.

The protein in the N-terminal section; belongs to the N-acetylglucosamine-1-phosphate uridyltransferase family. This sequence in the C-terminal section; belongs to the transferase hexapeptide repeat family. In terms of assembly, homotrimer. Mg(2+) is required as a cofactor.

It localises to the cytoplasm. The enzyme catalyses alpha-D-glucosamine 1-phosphate + acetyl-CoA = N-acetyl-alpha-D-glucosamine 1-phosphate + CoA + H(+). It carries out the reaction N-acetyl-alpha-D-glucosamine 1-phosphate + UTP + H(+) = UDP-N-acetyl-alpha-D-glucosamine + diphosphate. It functions in the pathway nucleotide-sugar biosynthesis; UDP-N-acetyl-alpha-D-glucosamine biosynthesis; N-acetyl-alpha-D-glucosamine 1-phosphate from alpha-D-glucosamine 6-phosphate (route II): step 2/2. The protein operates within nucleotide-sugar biosynthesis; UDP-N-acetyl-alpha-D-glucosamine biosynthesis; UDP-N-acetyl-alpha-D-glucosamine from N-acetyl-alpha-D-glucosamine 1-phosphate: step 1/1. Its pathway is bacterial outer membrane biogenesis; LPS lipid A biosynthesis. Catalyzes the last two sequential reactions in the de novo biosynthetic pathway for UDP-N-acetylglucosamine (UDP-GlcNAc). The C-terminal domain catalyzes the transfer of acetyl group from acetyl coenzyme A to glucosamine-1-phosphate (GlcN-1-P) to produce N-acetylglucosamine-1-phosphate (GlcNAc-1-P), which is converted into UDP-GlcNAc by the transfer of uridine 5-monophosphate (from uridine 5-triphosphate), a reaction catalyzed by the N-terminal domain. The chain is Bifunctional protein GlmU from Levilactobacillus brevis (strain ATCC 367 / BCRC 12310 / CIP 105137 / JCM 1170 / LMG 11437 / NCIMB 947 / NCTC 947) (Lactobacillus brevis).